Consider the following 284-residue polypeptide: NADH-cytochrome b5 reductase 1 (284 aa).

Residues 8–28 (PLVIFSTLAAIILAAVAVYVV) traverse the membrane as a helical segment. The 104-residue stretch at 41–144 (DVFQKFPLIE…RGPKGFFTYT (104 aa)) folds into the FAD-binding FR-type domain. Residues 124-139 (DSKS…GPKG) and 150-182 (HLGM…KISL) contribute to the FAD site.

This sequence belongs to the flavoprotein pyridine nucleotide cytochrome reductase family. Monomer. Component of the 2-(3-amino-3-carboxypropyl)histidine synthase complex composed of DPH1, DPH2, DPH3 and a NADH-dependent reductase, predominantly CBR1. FAD is required as a cofactor.

It localises to the mitochondrion outer membrane. The enzyme catalyses 2 Fe(III)-[cytochrome b5] + NADH = 2 Fe(II)-[cytochrome b5] + NAD(+) + H(+). It catalyses the reaction 2 Fe(3+)-[Dph3] + NADH = 2 Fe(2+)-[Dph3] + NAD(+) + H(+). The protein operates within protein modification; peptidyl-diphthamide biosynthesis. In terms of biological role, NADH-dependent reductase for DPH3 and cytochrome b5. Required for the first step of diphthamide biosynthesis, a post-translational modification of histidine which occurs in elongation factor 2. DPH1 and DPH2 transfer a 3-amino-3-carboxypropyl (ACP) group from S-adenosyl-L-methionine (SAM) to a histidine residue, the reaction is assisted by a reduction system comprising DPH3 and a NADH-dependent reductase, predominantly CBR1. By reducing DPH3, also involved in the formation of the tRNA wobble base modification mcm5s 2U (5-methoxycarbonylmethyl-2-thiouridine), mediated by the elongator complex. The cytochrome b5/NADH cytochrome b5 reductase electron transfer system supports the catalytic activity of several sterol biosynthetic enzymes. The protein is NADH-cytochrome b5 reductase 1 (CBR1) of Meyerozyma guilliermondii (strain ATCC 6260 / CBS 566 / DSM 6381 / JCM 1539 / NBRC 10279 / NRRL Y-324) (Yeast).